The following is a 242-amino-acid chain: Small ribosomal subunit protein uS7m (242 aa).

The transit peptide at 1-37 (MAAPALRAPLRWSGLALGVRCAVWNLPGLTQVRGSRY) directs the protein to the mitochondrion. Residue K228 is modified to N6-acetyllysine.

The protein belongs to the universal ribosomal protein uS7 family. In terms of assembly, component of the mitochondrial ribosome small subunit (28S) which comprises a 12S rRNA and about 30 distinct proteins.

It is found in the mitochondrion. This Mus musculus (Mouse) protein is Small ribosomal subunit protein uS7m (Mrps7).